The chain runs to 140 residues: MSKRGRGGSSGAKFRISLGLPVGAVINCADNTGAKNLYIISVKGIKGRLNRLPSAGVGDMVMATVKKGKPELRKKVHPAVVIRQRKSYRRKDGVFLYFEDNAGVIVNNKGEMKGSAITGPVAKECADLWPRIASNAGSIA.

The protein belongs to the universal ribosomal protein uL14 family. As to quaternary structure, component of the large ribosomal subunit.

It is found in the cytoplasm. In terms of biological role, component of the large ribosomal subunit. The ribosome is a large ribonucleoprotein complex responsible for the synthesis of proteins in the cell. In Danio rerio (Zebrafish), this protein is Large ribosomal subunit protein uL14 (rpl23).